Reading from the N-terminus, the 1011-residue chain is Probable calcium-transporting ATPase (1011 aa).

Residues 1–65 (MLPENLPTDP…WKLVLAQFED (65 aa)) lie on the Cytoplasmic side of the membrane. The chain crosses the membrane as a helical span at residues 66–84 (TLVRILLLAATVSFAMAVV). Residues 85-90 (ENNAAD) lie on the Extracellular side of the membrane. A helical membrane pass occupies residues 91–110 (FVEPFIILLILILNATVGVW). At 111–258 (QENRAEGAIE…QVKLDEFGVL (148 aa)) the chain is on the cytoplasmic side. The chain crosses the membrane as a helical span at residues 259–278 (LSKVIGYICLVVFAVNLVRW). Residues 279-303 (YATHKPTKNETFFTRYIQPSVHCLK) lie on the Extracellular side of the membrane. A helical transmembrane segment spans residues 304 to 321 (VAVALAVAAIPEGLPAVV). Over 322–770 (TTCLALGTRR…RYLISSNIGE (449 aa)) the chain is Cytoplasmic. The active-site 4-aspartylphosphate intermediate is the Asp-357. Lys-514 is an ATP binding site. Residues 771-794 (VVCILVTGLFGLPEALSPVQLLWV) traverse the membrane as a helical segment. Over 795–835 (NLVTDGLPATALGFNAPDRDIMEQRPRRMEEPIVNGWLFMR) the chain is Extracellular. Residues 836–856 (YMVIGVYVGLATVGGFLWWFL) traverse the membrane as a helical segment. At 857–885 (RHGFSWHDLTTYTACSDMTNGTCLLLANP) the chain is on the cytoplasmic side. The chain crosses the membrane as a helical span at residues 886 to 905 (QTARAIALSILVVVEMLNAL). Residues 906 to 922 (NALSENASLIVSRPSSN) lie on the Extracellular side of the membrane. A helical membrane pass occupies residues 923–942 (VWLLFAIFSSLSLHLIIMYV). Topologically, residues 943 to 1011 (PFFAKLFNIV…MEKAQEKKKD (69 aa)) are cytoplasmic.

It belongs to the cation transport ATPase (P-type) (TC 3.A.3) family.

The protein resides in the flagellar pocket. Its subcellular location is the cell membrane. The enzyme catalyses Ca(2+)(in) + ATP + H2O = Ca(2+)(out) + ADP + phosphate + H(+). This magnesium-dependent enzyme catalyzes the hydrolysis of ATP coupled with the transport of the calcium. The sequence is that of Probable calcium-transporting ATPase (TBA1) from Trypanosoma brucei brucei.